We begin with the raw amino-acid sequence, 250 residues long: Golgi SNAP receptor complex member 1 (250 aa).

An N-acetylalanine modification is found at Ala-2. Over 2-229 (AAGTSNYWED…QRINLRKRRD (228 aa)) the chain is Cytoplasmic. Residues 9–30 (WEDLRKQARQLENELDLKLVSF) are a coiled coil. Residues 37-59 (YSHSSARDGGRDRYSSDTTPLLN) form a disordered region. Residues 41–51 (SARDGGRDRYS) are compositionally biased toward basic and acidic residues. The stretch at 68-95 (ETMAIEIEQLLARLTGVNDKMAEYTHSA) forms a coiled coil. Position 141 is a phosphoserine (Ser-141). The helical; Anchor for type IV membrane protein transmembrane segment at 230 to 250 (SLILGGVIGICTILLLLYAFH) threads the bilayer.

It belongs to the GOSR1 family. As to quaternary structure, component of several multiprotein Golgi SNARE complexes. Identified in a SNARE complex with BET1, STX5 and YKT6, in a SNARE complex with BET1L, STX5 and YKT6, in a SNARE complex with STX5, GOSR2, SEC22B and BET1, and in complex with STX5 and COG3. Interacts with GABARAPL2. Interacts with the 34 kDa STX5 isoform.

It is found in the golgi apparatus membrane. Involved in transport from the ER to the Golgi apparatus as well as in intra-Golgi transport. It belongs to a super-family of proteins called t-SNAREs or soluble NSF (N-ethylmaleimide-sensitive factor) attachment protein receptor. May play a protective role against hydrogen peroxide induced cytotoxicity under glutathione depleted conditions in neuronal cells by regulating the intracellular ROS levels via inhibition of p38 MAPK (MAPK11, MAPK12, MAPK13 and MAPK14). Participates in docking and fusion stage of ER to cis-Golgi transport. Plays an important physiological role in VLDL-transport vesicle-Golgi fusion and thus in VLDL delivery to the hepatic cis-Golgi. The protein is Golgi SNAP receptor complex member 1 (Gosr1) of Rattus norvegicus (Rat).